Here is a 95-residue protein sequence, read N- to C-terminus: Citrate lyase acyl carrier protein (95 aa).

The residue at position 14 (Ser-14) is an O-(phosphoribosyl dephospho-coenzyme A)serine.

Belongs to the CitD family. In terms of assembly, oligomer with a subunit composition of (alpha,beta,gamma)6.

It localises to the cytoplasm. Its function is as follows. Covalent carrier of the coenzyme of citrate lyase. The polypeptide is Citrate lyase acyl carrier protein (Haemophilus influenzae (strain 86-028NP)).